Consider the following 115-residue polypeptide: Cyclin-dependent kinase 2-associated protein 1 (115 aa).

The interaction with CDK2AP2 stretch occupies residues 20–25; that stretch reads GSVHSP. S46 carries the post-translational modification Phosphoserine; by IKKE.

This sequence belongs to the CDK2AP family. Homodimer. Component of the nucleosome remodeling and deacetylase (NuRD) repressor complex, composed of core proteins MTA1, MTA2, MTA3, RBBP4, RBBP7, HDAC1, HDAC2, MBD2, MBD3, and peripherally associated proteins CDK2AP1, CDK2AP2, GATAD2A, GATAD2B, CHD3, CHD4 and CHD5. The exact stoichiometry of the NuRD complex is unknown, and some subunits such as MBD2 and MBD3, GATAD2A and GATAD2B, and CHD3, CHD4 and CHD5 define mutually exclusive NuRD complexes. Interacts with monomeric unphosphorylated CDK2. Interacts with CDK2AP2. Interacts with GATAD2A. Interacts with HDAC1. Interacts with HDAC2. Interacts with MBD2. Interacts with MBD3. Interacts with RBBP4. Interacts with RBBP7. Phosphorylated in vitro by IKBKE at Ser-46.

The protein localises to the nucleus. It localises to the chromosome. Inhibitor of cyclin-dependent kinase CDK2. Also acts as a component of the histone deacetylase NuRD complex which participates in the remodeling of chromatin. The sequence is that of Cyclin-dependent kinase 2-associated protein 1 (CDK2AP1) from Homo sapiens (Human).